The chain runs to 365 residues: Sulfate/thiosulfate import ATP-binding protein CysA (365 aa).

Residues Ile3–Met237 enclose the ABC transporter domain. Gly35 to Thr42 is an ATP binding site.

This sequence belongs to the ABC transporter superfamily. Sulfate/tungstate importer (TC 3.A.1.6) family. As to quaternary structure, the complex is composed of two ATP-binding proteins (CysA), two transmembrane proteins (CysT and CysW) and a solute-binding protein (CysP).

The protein resides in the cell inner membrane. The catalysed reaction is sulfate(out) + ATP + H2O = sulfate(in) + ADP + phosphate + H(+). It catalyses the reaction thiosulfate(out) + ATP + H2O = thiosulfate(in) + ADP + phosphate + H(+). Its function is as follows. Part of the ABC transporter complex CysAWTP involved in sulfate/thiosulfate import. Responsible for energy coupling to the transport system. In Escherichia coli O157:H7, this protein is Sulfate/thiosulfate import ATP-binding protein CysA.